A 370-amino-acid polypeptide reads, in one-letter code: 3-dehydroquinate synthase (370 aa).

Residues 112 to 116 (GVIGD), 136 to 137 (TT), Lys149, Lys158, and 176 to 179 (TLAT) each bind NAD(+). 3 residues coordinate Zn(2+): Glu191, His254, and His276.

Belongs to the sugar phosphate cyclases superfamily. Dehydroquinate synthase family. Co(2+) serves as cofactor. The cofactor is Zn(2+). Requires NAD(+) as cofactor.

It localises to the cytoplasm. It carries out the reaction 7-phospho-2-dehydro-3-deoxy-D-arabino-heptonate = 3-dehydroquinate + phosphate. Its pathway is metabolic intermediate biosynthesis; chorismate biosynthesis; chorismate from D-erythrose 4-phosphate and phosphoenolpyruvate: step 2/7. Catalyzes the conversion of 3-deoxy-D-arabino-heptulosonate 7-phosphate (DAHP) to dehydroquinate (DHQ). This Xylella fastidiosa (strain M12) protein is 3-dehydroquinate synthase.